We begin with the raw amino-acid sequence, 101 residues long: Urease subunit beta (101 aa).

Belongs to the urease beta subunit family. Heterotrimer of UreA (gamma), UreB (beta) and UreC (alpha) subunits. Three heterotrimers associate to form the active enzyme.

It is found in the cytoplasm. The catalysed reaction is urea + 2 H2O + H(+) = hydrogencarbonate + 2 NH4(+). The protein operates within nitrogen metabolism; urea degradation; CO(2) and NH(3) from urea (urease route): step 1/1. The polypeptide is Urease subunit beta (Roseobacter denitrificans (strain ATCC 33942 / OCh 114) (Erythrobacter sp. (strain OCh 114))).